A 419-amino-acid polypeptide reads, in one-letter code: DNA ligase (419 aa).

An NTD region spans residues Met-1–Asn-120. An AD domain region spans residues Arg-121–Leu-317. Positions 149, 151, 203, and 232 each coordinate ATP. The active-site N6-AMP-lysine intermediate is Lys-151. Glu-203 provides a ligand contact to a divalent metal cation. Residue Glu-291 coordinates a divalent metal cation. ATP-binding residues include Ile-294 and Lys-316. Residues Lys-318–Ile-419 form an OB domain region.

Belongs to the ATP-dependent DNA ligase family. The cofactor is a divalent metal cation.

It is found in the virion. It catalyses the reaction ATP + (deoxyribonucleotide)n-3'-hydroxyl + 5'-phospho-(deoxyribonucleotide)m = (deoxyribonucleotide)n+m + AMP + diphosphate.. Its function is as follows. Very low-fidelity DNA ligase that seals nicks in double-stranded DNA during DNA repair. Together with the viral repair DNA polymerase X, fills the single nucleotide gaps generated by the AP endonuclease. It is not essential for viral replication and recombination. Displays a very low adenylation activity towards DNA with 3'-dideoxy- or 3'-amino-terminated nicks compared to regular nick DNA. The polypeptide is DNA ligase (LIG) (Ornithodoros (relapsing fever ticks)).